The primary structure comprises 796 residues: Nuclear cap-binding protein subunit 1 (796 aa).

Residues 1 to 26 form a disordered region; that stretch reads MSRRRHSDGDDGGQSHKRRRTSEPVE. The 213-residue stretch at 28–240 folds into the MIF4G domain; it reads EDRLESLICR…CLYAQIQKLK (213 aa). Residues 641 to 719 are a coiled coil; the sequence is LHSTIRKMNK…SEQKNLFLVI (79 aa). Residues 664–695 form a disordered region; that stretch reads DKLERQQHKKQKDSGDEEDMEKNSEDEDGQLE. Residues 678 to 695 show a composition bias toward acidic residues; sequence GDEEDMEKNSEDEDGQLE.

The protein belongs to the NCBP1 family. As to quaternary structure, component of the nuclear cap-binding complex (CBC), a heterodimer composed of ncbp1/cbp80 and ncbp2/cbp20 that interacts with m7GpppG-capped RNA. Component of an alternative nuclear cap-binding complex (CBC) composed of ncbp1/cbp80 and ncbp3.

The protein localises to the nucleus. The protein resides in the cytoplasm. Its function is as follows. Component of the cap-binding complex (CBC), which binds cotranscriptionally to the 5'-cap of pre-mRNAs and is involved in various processes such as pre-mRNA splicing, translation regulation, nonsense-mediated mRNA decay, RNA-mediated gene silencing (RNAi) by microRNAs (miRNAs) and mRNA export. The CBC complex is involved in mRNA export from the nucleus, leading to the recruitment of the mRNA export machinery to the 5'-end of mRNA and to mRNA export in a 5' to 3' direction through the nuclear pore. The CBC complex is also involved in mediating U snRNA and intronless mRNAs export from the nucleus. The CBC complex is essential for a pioneer round of mRNA translation, before steady state translation when the CBC complex is replaced by cytoplasmic cap-binding protein eIF4E. The pioneer round of mRNA translation mediated by the CBC complex plays a central role in nonsense-mediated mRNA decay (NMD), NMD only taking place in mRNAs bound to the CBC complex, but not on eIF4E-bound mRNAs. The CBC complex enhances NMD in mRNAs containing at least one exon-junction complex (EJC), promoting the interaction between UPF1 and UPF2. The CBC complex is also involved in 'failsafe' NMD, which is independent of the EJC complex, while it does not participate in Staufen-mediated mRNA decay (SMD). During cell proliferation, the CBC complex is also involved in microRNAs (miRNAs) biogenesis via its interaction with SRRT/ARS2 and is required for miRNA-mediated RNA interference. The CBC complex also acts as a negative regulator of parn, thereby acting as an inhibitor of mRNA deadenylation. In the CBC complex, ncbp1/cbp80 does not bind directly capped RNAs (m7GpppG-capped RNA) but is required to stabilize the movement of the N-terminal loop of ncbp2/cbp20 and lock the CBC into a high affinity cap-binding state with the cap structure. Associates with NCBP3 to form an alternative cap-binding complex (CBC) which plays a key role in mRNA export. The conventional CBC with NCBP2 binds both small nuclear RNA (snRNA) and messenger (mRNA) and is involved in their export from the nucleus whereas the alternative CBC with NCBP3 does not bind snRNA and associates only with mRNA thereby playing a role only in mRNA export. The protein is Nuclear cap-binding protein subunit 1 (ncbp1) of Salmo salar (Atlantic salmon).